The chain runs to 564 residues: Urease subunit alpha (564 aa).

In terms of domain architecture, Urease spans 126–564 (GGIDTHIHFI…LPMAQRYFLF (439 aa)). Residues His-131, His-133, and Lys-214 each contribute to the Ni(2+) site. Position 214 is an N6-carboxylysine (Lys-214). His-216 is a substrate binding site. His-243 and His-269 together coordinate Ni(2+). The active-site Proton donor is the His-317. Asp-357 provides a ligand contact to Ni(2+).

Belongs to the metallo-dependent hydrolases superfamily. Urease alpha subunit family. In terms of assembly, heterotrimer of UreA (gamma), UreB (beta) and UreC (alpha) subunits. Three heterotrimers associate to form the active enzyme. Requires Ni cation as cofactor. Carboxylation allows a single lysine to coordinate two nickel ions.

The protein resides in the cytoplasm. The catalysed reaction is urea + 2 H2O + H(+) = hydrogencarbonate + 2 NH4(+). The protein operates within nitrogen metabolism; urea degradation; CO(2) and NH(3) from urea (urease route): step 1/1. The protein is Urease subunit alpha of Burkholderia thailandensis (strain ATCC 700388 / DSM 13276 / CCUG 48851 / CIP 106301 / E264).